The following is a 198-amino-acid chain: Na(+)-translocating NADH-quinone reductase subunit E (198 aa).

6 consecutive transmembrane segments (helical) span residues 11 to 31 (AVFV…FLAV), 35 to 55 (VSTA…SVPV), 77 to 97 (FLNF…LEMI), 110 to 130 (GIFL…SFMV), 140 to 160 (VVYG…MAGI), and 176 to 196 (LGIT…FSGV).

The protein belongs to the NqrDE/RnfAE family. Composed of six subunits; NqrA, NqrB, NqrC, NqrD, NqrE and NqrF.

The protein localises to the cell inner membrane. The catalysed reaction is a ubiquinone + n Na(+)(in) + NADH + H(+) = a ubiquinol + n Na(+)(out) + NAD(+). NQR complex catalyzes the reduction of ubiquinone-1 to ubiquinol by two successive reactions, coupled with the transport of Na(+) ions from the cytoplasm to the periplasm. NqrA to NqrE are probably involved in the second step, the conversion of ubisemiquinone to ubiquinol. The sequence is that of Na(+)-translocating NADH-quinone reductase subunit E from Serratia proteamaculans (strain 568).